The primary structure comprises 60 residues: Cytotoxin 5 (60 aa).

Disulfide bonds link cysteine 3–cysteine 21, cysteine 14–cysteine 38, cysteine 42–cysteine 53, and cysteine 54–cysteine 59.

The protein belongs to the three-finger toxin family. Short-chain subfamily. Type IA cytotoxin sub-subfamily. Monomer in solution; Homodimer and oligomer in the presence of negatively charged lipids forming a pore with a size ranging between 20 and 30 Angstroms. In terms of tissue distribution, expressed by the venom gland.

The protein resides in the secreted. Its subcellular location is the target cell membrane. In terms of biological role, shows cytolytic activity on many different cells by forming pore in lipid membranes. In vivo, increases heart rate or kills the animal by cardiac arrest. In addition, it binds to heparin with high affinity, interacts with Kv channel-interacting protein 1 (KCNIP1) in a calcium-independent manner, and binds to integrin alpha-V/beta-3 (ITGAV/ITGB3) with moderate affinity. The protein is Cytotoxin 5 of Naja kaouthia (Monocled cobra).